A 433-amino-acid polypeptide reads, in one-letter code: Pyrimidine-nucleoside phosphorylase (433 aa).

Position 81 to 83 (81 to 83) interacts with phosphate; it reads KHS. G88 and T90 together coordinate K(+). Phosphate contacts are provided by residues T92, 108 to 110, and T120; that span reads KMS. Residues R168 and K187 each coordinate substrate. Residues L243, A246, and E255 each coordinate K(+).

The protein belongs to the thymidine/pyrimidine-nucleoside phosphorylase family. Homodimer. Requires K(+) as cofactor.

It catalyses the reaction uridine + phosphate = alpha-D-ribose 1-phosphate + uracil. It carries out the reaction thymidine + phosphate = 2-deoxy-alpha-D-ribose 1-phosphate + thymine. The enzyme catalyses 2'-deoxyuridine + phosphate = 2-deoxy-alpha-D-ribose 1-phosphate + uracil. In terms of biological role, catalyzes phosphorolysis of the pyrimidine nucleosides uridine, thymidine and 2'-deoxyuridine with the formation of the corresponding pyrimidine base and ribose-1-phosphate. This is Pyrimidine-nucleoside phosphorylase (pdp) from Geobacillus stearothermophilus (Bacillus stearothermophilus).